The primary structure comprises 837 residues: Endo-1,4-beta-xylanase Z (837 aa).

The N-terminal stretch at 1-28 (MSRKLFSVLLVGLMLMTSLLVTISSTSA) is a signal peptide. Residues 299-420 (TRIEAEDYDG…PVNIDWFTFG (122 aa)) form the CBM6 domain. The Dockerin domain maps to 424-492 (SSTGLGDLNG…ILRIITEFPG (69 aa)). The GH10 domain occupies 512 to 833 (TISGNALRDY…KPAYNAIKEA (322 aa)). E645 acts as the Proton donor in catalysis. E754 (nucleophile) is an active-site residue. C783 and C789 are disulfide-bonded.

The protein belongs to the glycosyl hydrolase 10 (cellulase F) family.

The catalysed reaction is Endohydrolysis of (1-&gt;4)-beta-D-xylosidic linkages in xylans.. The polypeptide is Endo-1,4-beta-xylanase Z (xynZ) (Acetivibrio thermocellus (strain ATCC 27405 / DSM 1237 / JCM 9322 / NBRC 103400 / NCIMB 10682 / NRRL B-4536 / VPI 7372) (Clostridium thermocellum)).